A 535-amino-acid polypeptide reads, in one-letter code: Intercellular adhesion molecule 1 (535 aa).

Residues 1–27 form the signal peptide; it reads MALGAAPAAQLALLALLGTLLPGPGGA. Topologically, residues 28–480 are extracellular; it reads GISIHPSKAI…LNVLHGQNIL (453 aa). An Ig-like C2-type 1 domain is found at 41-102; it reads GDSLTVNCSN…SNCHKEQTIA (62 aa). Asn47 carries an N-linked (GlcNAc...) asparagine glycan. Intrachain disulfides connect Cys48–Cys91 and Cys52–Cys95. 2 N-linked (GlcNAc...) asparagine glycosylation sites follow: Asn105 and Asn131. The 67-residue stretch at 127–193 folds into the Ig-like C2-type 2 domain; it reads GEELNLSCLV…FSCRWELDLR (67 aa). The cysteines at positions 134 and 186 are disulfide-linked. Residues 151-153 carry the Cell attachment site; atypical motif; it reads RGE. Asn183, Asn202, Asn236, Asn262, Asn302, Asn341, Asn357, Asn366, Asn404, and Asn428 each carry an N-linked (GlcNAc...) asparagine glycan. In terms of domain architecture, Ig-like C2-type 3 spans 230-295; the sequence is GSRWPVNCTL…LKCSVTLGEV (66 aa). Cys237 and Cys288 are joined by a disulfide. Residues 323-376 enclose the Ig-like C2-type 4 domain; the sequence is WTTVTVECVTRDGAVVKLNGTSAVPPGPRAQLKLNASASDHRSNFSCSAALEIA. 4 disulfides stabilise this stretch: Cys330–Cys369, Cys401–Cys417, Cys417–Cys456, and Cys429–Cys456. In terms of domain architecture, Ig-like C2-type 5 spans 410–463; the sequence is GSEQTLKCEAQGNPIPKLNCSRKGDGASLPIGDLRPVRREVAGTYLCRATSARG. A helical membrane pass occupies residues 481–503; sequence DIVIPVVAVTLILGALGTAGYVY. The Cytoplasmic portion of the chain corresponds to 504–535; that stretch reads NYQRKIQKYELQKARKAQEEAALKLNAQSTPP. The residue at position 533 (Thr533) is a Phosphothreonine.

The protein belongs to the immunoglobulin superfamily. ICAM family. As to quaternary structure, homodimer. Interacts with MUC1 and promotes cell aggregation in epithelial cells. Interacts with ARHGEF26/SGEF. Interacts (on T cell side) with CD81, CD247 and CD9 at immunological synapses between antigen-presenting cells and T cells. In terms of processing, monoubiquitinated, which is promoted by MARCH9 and leads to endocytosis.

It is found in the membrane. In terms of biological role, ICAM proteins are ligands for the leukocyte adhesion protein LFA-1 (integrin alpha-L/beta-2). During leukocyte trans-endothelial migration, ICAM1 engagement promotes the assembly of endothelial apical cups through ARHGEF26/SGEF and RHOG activation. The polypeptide is Intercellular adhesion molecule 1 (ICAM1) (Bos taurus (Bovine)).